We begin with the raw amino-acid sequence, 226 residues long: 7-cyano-7-deazaguanine synthase (226 aa).

An ATP-binding site is contributed by 7 to 17; that stretch reads ISGGMDSLVVA. Zn(2+)-binding residues include cysteine 187, cysteine 195, cysteine 198, and cysteine 201.

The protein belongs to the QueC family. The cofactor is Zn(2+).

The catalysed reaction is 7-carboxy-7-deazaguanine + NH4(+) + ATP = 7-cyano-7-deazaguanine + ADP + phosphate + H2O + H(+). Its pathway is purine metabolism; 7-cyano-7-deazaguanine biosynthesis. In terms of biological role, catalyzes the ATP-dependent conversion of 7-carboxy-7-deazaguanine (CDG) to 7-cyano-7-deazaguanine (preQ(0)). This chain is 7-cyano-7-deazaguanine synthase, found in Chlorobium phaeobacteroides (strain BS1).